The chain runs to 86 residues: Weak neurotoxin 9 (86 aa).

A signal peptide spans 1 to 21 (MKTLLLTLVVVTIVCLDLGYT). 5 cysteine pairs are disulfide-bonded: Cys24–Cys45, Cys27–Cys32, Cys38–Cys63, Cys67–Cys78, and Cys79–Cys84.

This sequence belongs to the three-finger toxin family. Ancestral subfamily. Orphan group II sub-subfamily. As to expression, expressed by the venom gland.

It is found in the secreted. Binds with low affinity to muscular (alpha-1-beta-1-delta-epsilon/CHRNA1-CHRNB1-CHRND-CHRNE) and very low affinity to neuronal (alpha-7/CHRNA7) nicotinic acetylcholine receptor (nAChR). The sequence is that of Weak neurotoxin 9 from Naja sputatrix (Malayan spitting cobra).